Here is a 251-residue protein sequence, read N- to C-terminus: MRFDNKVVVITGAGNGMGEAAARRFSAEGAIVVLADWAKEAVDKVAASLPKGRAMAVHIDVSDHVAVEKMMNEVAEKLGRIDVLLNNAGVHVAGSVLETSIDDWRRIAGVDIDGVVFCSKFALPHLLKTKGCIVNTASVSGLGGDWGAAYYCAAKGAVVNLTRAMALDHGGDGVRINSVCPSLVKTNMTNGWPQEIRDKFNERIALGRAAEPEEVAAVMAFLASDDASFINGANIPVDGGATASDGQPKIV.

NAD(+)-binding residues include Asn15, Met17, Asp36, Asp60, Val61, and Asn87. (R)-acetoin-binding residues include Ser138, Ser140, and Tyr151. Ser138 is a (S)-acetoin binding site. Positions 151, 155, 184, and 186 each coordinate NAD(+). Position 151 (Tyr151) interacts with (S)-acetoin. Residue Tyr151 is the Proton acceptor of the active site.

It belongs to the short-chain dehydrogenases/reductases (SDR) family. Homotetramer; dimer of dimers.

The catalysed reaction is (R,S)-butane-2,3-diol + NAD(+) = (R)-acetoin + NADH + H(+). The enzyme catalyses (S,S)-butane-2,3-diol + NAD(+) = (S)-acetoin + NADH + H(+). It carries out the reaction (S)-acetoin + NAD(+) = diacetyl + NADH + H(+). Its activity is regulated as follows. Oxidation of meso-2,3-butanediol is enhanced in the presence of Fe(2+). Reduction of diacetyl and (3S/3R)-acetoin is slightly enhanced in the presence of Mg(2+) and Mn(2+). Activity is inhibited by several metal ions, particularly Fe(3+) for reduction of diacetyl and acetoin. In terms of biological role, catalyzes the NAD-dependent oxidation of meso-2,3-butanediol to (3R)-acetoin, and of (2S,3S)-2,3-butanediol to (3S)-acetoin, with much lower efficiency. Can also oxidize several primary alcohols such as glycerol, 1-2-pentanediol and 1,2-propanediol, with lower activity. Cannot use (2R,3R)-2,3-butanediol. In the presence of NADH, catalyzes the reduction of (3R)-acetoin to meso-2,3-butanediol, of (3S)-acetoin to (2S,3S)-2,3-butanediol and of diacetyl to (3S)-acetoin. No activity is detected with NADPH/NADP(+). This chain is Meso-2,3-butanediol dehydrogenase, found in Serratia marcescens.